The sequence spans 216 residues: Probable transaldolase (216 aa).

K85 acts as the Schiff-base intermediate with substrate in catalysis.

The protein belongs to the transaldolase family. Type 3B subfamily.

The protein localises to the cytoplasm. The catalysed reaction is D-sedoheptulose 7-phosphate + D-glyceraldehyde 3-phosphate = D-erythrose 4-phosphate + beta-D-fructose 6-phosphate. Its pathway is carbohydrate degradation; pentose phosphate pathway; D-glyceraldehyde 3-phosphate and beta-D-fructose 6-phosphate from D-ribose 5-phosphate and D-xylulose 5-phosphate (non-oxidative stage): step 2/3. In terms of biological role, transaldolase is important for the balance of metabolites in the pentose-phosphate pathway. In Dehalococcoides mccartyi (strain ATCC BAA-2266 / KCTC 15142 / 195) (Dehalococcoides ethenogenes (strain 195)), this protein is Probable transaldolase.